The chain runs to 337 residues: Protein RecA (337 aa).

Position 66–73 (66–73 (GPESSGKT)) interacts with ATP.

This sequence belongs to the RecA family.

The protein localises to the cytoplasm. Functionally, can catalyze the hydrolysis of ATP in the presence of single-stranded DNA, the ATP-dependent uptake of single-stranded DNA by duplex DNA, and the ATP-dependent hybridization of homologous single-stranded DNAs. It interacts with LexA causing its activation and leading to its autocatalytic cleavage. In Mesomycoplasma hyopneumoniae (strain 232) (Mycoplasma hyopneumoniae), this protein is Protein RecA.